The chain runs to 491 residues: UDP-N-acetylmuramate--L-alanine ligase (491 aa).

126–132 (GTHGKTT) contributes to the ATP binding site.

It belongs to the MurCDEF family.

The protein localises to the cytoplasm. The enzyme catalyses UDP-N-acetyl-alpha-D-muramate + L-alanine + ATP = UDP-N-acetyl-alpha-D-muramoyl-L-alanine + ADP + phosphate + H(+). It functions in the pathway cell wall biogenesis; peptidoglycan biosynthesis. Functionally, cell wall formation. This Salmonella paratyphi C (strain RKS4594) protein is UDP-N-acetylmuramate--L-alanine ligase.